Consider the following 133-residue polypeptide: C-C motif chemokine 21a (133 aa).

Positions 1 to 23 are cleaved as a signal peptide; the sequence is MAQMMTLSLLSLVLALCIPWTQG. Intrachain disulfides connect Cys-31/Cys-57, Cys-32/Cys-75, and Cys-103/Cys-122. The tract at residues 86–133 is disordered; sequence LMRRLDQPPAPGKQSPGCRKNRGTSKSGKKGKGSKGCKRTEQTQPSRG. The C-terminal basic extension stretch occupies residues 98 to 133; sequence KQSPGCRKNRGTSKSGKKGKGSKGCKRTEQTQPSRG. Over residues 104 to 122 the composition is skewed to basic residues; it reads RKNRGTSKSGKKGKGSKGC.

This sequence belongs to the intercrine beta (chemokine CC) family. In terms of assembly, binds to CCR7 and to CXCR3. Interacts with PDPN; relocalizes PDPN to the basolateral membrane. Interacts with GPR174. As to expression, expressed strongly in lung, spleen, thymus, peripheral and mesentric lymph nodes. Also expressed in the testis, kidney, liver, and heart.

The protein resides in the secreted. Its function is as follows. Inhibits hemopoiesis and stimulates chemotaxis. Chemotactic in vitro for thymocytes and activated T-cells, but not for B-cells, macrophages, or neutrophils. Potent mesangial cell chemoattractant. Shows preferential activity towards naive T-cells. May play a role in mediating homing of lymphocytes to secondary lymphoid organs. This is C-C motif chemokine 21a (Ccl21a) from Mus musculus (Mouse).